Here is a 328-residue protein sequence, read N- to C-terminus: Gonadotropin-releasing hormone receptor (328 aa).

The Extracellular portion of the chain corresponds to 1-38 (MANRAYLEQKQTQCSIINSSFSMTHRDLPTLTLSGKIR). Residue asparagine 18 is glycosylated (N-linked (GlcNAc...) asparagine). The chain crosses the membrane as a helical span at residues 39 to 58 (VMVTFFLFLVSTAFNASFLM). The Cytoplasmic portion of the chain corresponds to 59 to 77 (KLQRQTQKKEEVKKLTRMK). The helical transmembrane segment at 78–97 (VLLKHLTLANLLETVIVMPL) threads the bilayer. Topologically, residues 98-115 (DGIWNVTVQWYAGEFLCK) are extracellular. Residue asparagine 102 is glycosylated (N-linked (GlcNAc...) asparagine). The cysteines at positions 114 and 196 are disulfide-linked. A helical membrane pass occupies residues 116 to 137 (ALSYLKLFSMYAPAFMMVVISL). The Cytoplasmic segment spans residues 138-164 (DRFLAITRPLAVKSNTKVGQSLIAVAW). A helical membrane pass occupies residues 165 to 184 (FLSIVLAGPQLYIFRMIYVE). The Extracellular segment spans residues 185-212 (DISGQTGNFSQCVTHCSFPEWWQEAFYN). N-linked (GlcNAc...) asparagine glycosylation occurs at asparagine 192. Residues 213 to 232 (LLTFSCLFIGPLLIMLVCNA) traverse the membrane as a helical segment. Residues 233-281 (KIIFTLTQVLHQDPHELQLNRSKNNIPRARLRTLKMTVAFATLFTICWT) are Cytoplasmic-facing. The helical transmembrane segment at 282–300 (PYYVLGIWYWFDPEMLNRV) threads the bilayer. Over 301-306 (SDPVNH) the chain is Extracellular. Residues 307 to 326 (FFFLFGLLNPCFDPLIYGYF) form a helical membrane-spanning segment. Residues 327–328 (SL) are Cytoplasmic-facing.

Belongs to the G-protein coupled receptor 1 family.

Its subcellular location is the cell membrane. Functionally, receptor for gonadotropin releasing hormone (GnRH) that mediates the action of GnRH to stimulate the secretion of the gonadotropic hormones luteinizing hormone (LH) and follicle-stimulating hormone (FSH). This receptor mediates its action by association with G-proteins that activate a phosphatidylinositol-calcium second messenger system. The protein is Gonadotropin-releasing hormone receptor (GNRHR) of Trichosurus vulpecula (Brush-tailed possum).